Here is a 440-residue protein sequence, read N- to C-terminus: Gap junction alpha-8 protein (440 aa).

Residues 2–12 (GDWSFLGNILE) lie within the membrane without spanning it. The Cytoplasmic portion of the chain corresponds to 13–21 (EVNEHSTVI). A helical transmembrane segment spans residues 22-42 (GRVWLTVLFIFRILILGTAAE). Over 43 to 71 (FVWGDEQSDFVCNTQQPGCENVCYDEAFP) the chain is Extracellular. Disulfide bonds link Cys54-Cys201, Cys61-Cys195, and Cys65-Cys190. The helical transmembrane segment at 72-92 (ISHIRLWVLQIIFVSTPSLMY) threads the bilayer. Over 93 to 161 (VGHAVHHVRM…GTLLRTYVCH (69 aa)) the chain is Cytoplasmic. Positions 111-143 (AEELCQQSRSNGGERVPIAPDQASIRKSSSSSK) are disordered. A helical transmembrane segment spans residues 162-182 (IIFKTLFEVGFIVGHYFLYGF). Residues 183–210 (RILPLYRCSRWPCPNVVDCFVSRPTEKT) are Extracellular-facing. The chain crosses the membrane as a helical span at residues 211–231 (IFILFMLSVAFVSLFLNIMEM). Residues 232 to 440 (SHLGMKGIRS…SRARSDDLTI (209 aa)) are Cytoplasmic-facing. A disordered region spans residues 334-440 (GAQEVEREEQ…SRARSDDLTI (107 aa)). 2 stretches are compositionally biased toward basic and acidic residues: residues 353–364 (VGEKKQEAEKVA) and 375–399 (DGEKVETPGVGKDDEKEELQAEKVT). The segment covering 423–432 (LSRLSKASSR) has biased composition (low complexity).

This sequence belongs to the connexin family. Alpha-type (group II) subfamily. A hemichannel or connexon is composed of a hexamer of connexins. A functional gap junction is formed by the apposition of two hemichannels. Forms heteromeric channels with GJA3. As to expression, detected in eye lens (at protein level).

The protein resides in the cell membrane. It localises to the cell junction. Its subcellular location is the gap junction. In terms of biological role, structural component of eye lens gap junctions. Gap junctions are dodecameric channels that connect the cytoplasm of adjoining cells. They are formed by the docking of two hexameric hemichannels, one from each cell membrane. Small molecules and ions diffuse from one cell to a neighboring cell via the central pore. This is Gap junction alpha-8 protein (Gja8) from Rattus norvegicus (Rat).